A 364-amino-acid chain; its full sequence is Aminomethyltransferase (364 aa).

This sequence belongs to the GcvT family. In terms of assembly, the glycine cleavage system is composed of four proteins: P, T, L and H.

The catalysed reaction is N(6)-[(R)-S(8)-aminomethyldihydrolipoyl]-L-lysyl-[protein] + (6S)-5,6,7,8-tetrahydrofolate = N(6)-[(R)-dihydrolipoyl]-L-lysyl-[protein] + (6R)-5,10-methylene-5,6,7,8-tetrahydrofolate + NH4(+). Functionally, the glycine cleavage system catalyzes the degradation of glycine. This is Aminomethyltransferase from Escherichia coli O127:H6 (strain E2348/69 / EPEC).